Consider the following 49-residue polypeptide: Single-stranded DNA-binding protein (49 aa).

As to quaternary structure, homodimer in the absence of DNA, monomer when binding DNA.

Binds preferentially to single-stranded DNA and therefore, destabilizes double-stranded DNA. It is involved in DNA replication, repair and recombination. Binds ss-DNA as the replication fork advances and stimulates the replisome processivity and accuracy. The protein is Single-stranded DNA-binding protein (32) of Enterobacteria phage RB9 (Bacteriophage RB9).